Consider the following 307-residue polypeptide: GTPase Era (307 aa).

Residues 13–180 form the Era-type G domain; the sequence is RCGFVALIGA…RRALAEMVPP (168 aa). The interval 21–28 is G1; it reads GAPNVGKS. 21–28 serves as a coordination point for GTP; it reads GAPNVGKS. Residues 47–51 are G2; the sequence is QTTRA. The G3 stretch occupies residues 68–71; that stretch reads DTPG. GTP-binding positions include 68–72 and 130–133; these read DTPGI and NKVD. The interval 130–133 is G4; it reads NKVD. Positions 159-161 are G5; it reads ISA. A KH type-2 domain is found at 211-288; the sequence is LHQELPYQST…HLFLFVKVRE (78 aa).

This sequence belongs to the TRAFAC class TrmE-Era-EngA-EngB-Septin-like GTPase superfamily. Era GTPase family. In terms of assembly, monomer.

The protein resides in the cytoplasm. It is found in the cell inner membrane. In terms of biological role, an essential GTPase that binds both GDP and GTP, with rapid nucleotide exchange. Plays a role in 16S rRNA processing and 30S ribosomal subunit biogenesis and possibly also in cell cycle regulation and energy metabolism. This is GTPase Era from Bradyrhizobium sp. (strain ORS 278).